The sequence spans 414 residues: Probable protein phosphatase 2C 9 (414 aa).

Residues 15 to 37 (TATAAVAAAVSASAAAAVSSAID) traverse the membrane as a helical segment. Residues 56–95 (LQAGEDGRPGKRQRLARTASGAPRPDEDSASERPSCGRTE) are disordered. The PPM-type phosphatase domain maps to 99 to 410 (RYGVTAVCGR…DNVSVVVVDL (312 aa)). Mn(2+) is bound by residues Asp-136 and Gly-137. Residues 186 to 195 (GNRASTRSDD) are compositionally biased toward basic and acidic residues. The segment at 186–212 (GNRASTRSDDEPACPCEQQTPSRRDHA) is disordered. Asp-319 contacts Mn(2+). A disordered region spans residues 345-372 (APAARPSGVPSSAEAAETENGGAASVKG). A compositionally biased stretch (low complexity) spans 355-369 (SSAEAAETENGGAAS). Asp-401 is a binding site for Mn(2+).

It belongs to the PP2C family. The cofactor is Mg(2+). Mn(2+) is required as a cofactor.

The protein localises to the membrane. The enzyme catalyses O-phospho-L-seryl-[protein] + H2O = L-seryl-[protein] + phosphate. The catalysed reaction is O-phospho-L-threonyl-[protein] + H2O = L-threonyl-[protein] + phosphate. In Oryza sativa subsp. japonica (Rice), this protein is Probable protein phosphatase 2C 9.